The chain runs to 346 residues: Phenylalanine--tRNA ligase alpha subunit (346 aa).

Position 258 (Glu258) interacts with Mg(2+).

The protein belongs to the class-II aminoacyl-tRNA synthetase family. Phe-tRNA synthetase alpha subunit type 1 subfamily. Tetramer of two alpha and two beta subunits. It depends on Mg(2+) as a cofactor.

The protein resides in the cytoplasm. It carries out the reaction tRNA(Phe) + L-phenylalanine + ATP = L-phenylalanyl-tRNA(Phe) + AMP + diphosphate + H(+). In Protochlamydia amoebophila (strain UWE25), this protein is Phenylalanine--tRNA ligase alpha subunit.